A 332-amino-acid chain; its full sequence is Methylthioribose-1-phosphate isomerase (332 aa).

Residues 44-46 (RGA), R87, and Q192 contribute to the substrate site. Catalysis depends on D233, which acts as the Proton donor. A substrate-binding site is contributed by 243–244 (NK).

The protein belongs to the eIF-2B alpha/beta/delta subunits family. MtnA subfamily.

It catalyses the reaction 5-(methylsulfanyl)-alpha-D-ribose 1-phosphate = 5-(methylsulfanyl)-D-ribulose 1-phosphate. It functions in the pathway amino-acid biosynthesis; L-methionine biosynthesis via salvage pathway; L-methionine from S-methyl-5-thio-alpha-D-ribose 1-phosphate: step 1/6. Catalyzes the interconversion of methylthioribose-1-phosphate (MTR-1-P) into methylthioribulose-1-phosphate (MTRu-1-P). The polypeptide is Methylthioribose-1-phosphate isomerase (Dehalococcoides mccartyi (strain CBDB1)).